A 232-amino-acid polypeptide reads, in one-letter code: Phosphoglycolate phosphatase (232 aa).

The Nucleophile role is filled by D13. Mg(2+) contacts are provided by D13, D15, and D175.

The protein belongs to the HAD-like hydrolase superfamily. CbbY/CbbZ/Gph/YieH family. In terms of assembly, monomer. Mg(2+) serves as cofactor. It depends on chloride as a cofactor.

The catalysed reaction is 2-phosphoglycolate + H2O = glycolate + phosphate. It participates in organic acid metabolism; glycolate biosynthesis; glycolate from 2-phosphoglycolate: step 1/1. In terms of biological role, specifically catalyzes the dephosphorylation of 2-phosphoglycolate. Is involved in the dissimilation of the intracellular 2-phosphoglycolate formed during the DNA repair of 3'-phosphoglycolate ends, a major class of DNA lesions induced by oxidative stress. The polypeptide is Phosphoglycolate phosphatase (Yersinia pestis).